Reading from the N-terminus, the 272-residue chain is Tumor necrosis factor receptor superfamily member 4 (272 aa).

Positions 1–19 (MYVWVQQPTALLLLALTLG) are cleaved as a signal peptide. Topologically, residues 20 to 211 (VTARRLNCVK…PPTLVTPEGP (192 aa)) are extracellular. TNFR-Cys repeat units follow at residues 26–61 (NCVK…TLCH) and 62–103 (PCET…DTVC). 8 disulfides stabilise this stretch: Cys-27–Cys-38, Cys-39–Cys-52, Cys-42–Cys-60, Cys-63–Cys-77, Cys-80–Cys-95, Cys-83–Cys-103, Cys-105–Cys-123, and Cys-126–Cys-139. One copy of the TNFR-Cys 3; truncated repeat lies at 104-124 (RCRPGTQPRQDSGYKLGVDCV). A TNFR-Cys 4 repeat occupies 125-165 (PCPPGHFSPGNNQACKPWTNCTLSGKQTRHPASDSLDAVCE). N-linked (GlcNAc...) asparagine glycosylation is present at Asn-144. A disulfide bond links Cys-145 and Cys-164. Residues 212–236 (AFAVLLGLGLGLLAPLTVLLALYLL) traverse the membrane as a helical segment. Over 237–272 (RKAWRLPNTPKPCWGNSFRTPIQEEHTDAHFTLAKI) the chain is Cytoplasmic.

Interacts with TRAF2, TRAF3 and TRAF5. Expressed in CD4(+) T-cells and in T-helper Th17 cells (at protein level).

It localises to the membrane. Its function is as follows. Receptor for TNFSF4/OX40L/GP34. Is a costimulatory molecule implicated in long-term T-cell immunity. This chain is Tumor necrosis factor receptor superfamily member 4 (Tnfrsf4), found in Mus musculus (Mouse).